A 174-amino-acid chain; its full sequence is Small ribosomal subunit protein uS5 (174 aa).

Residues 17–80 enclose the S5 DRBM domain; sequence WQERVVQIRR…ADGKKHLIDV (64 aa).

The protein belongs to the universal ribosomal protein uS5 family. As to quaternary structure, part of the 30S ribosomal subunit. Contacts proteins S4 and S8.

Its function is as follows. With S4 and S12 plays an important role in translational accuracy. Functionally, located at the back of the 30S subunit body where it stabilizes the conformation of the head with respect to the body. In Thermosynechococcus vestitus (strain NIES-2133 / IAM M-273 / BP-1), this protein is Small ribosomal subunit protein uS5.